Reading from the N-terminus, the 471-residue chain is Cell division protein FtsP (471 aa).

The tat-type signal signal peptide spans 1 to 27 (MSLSRRSFLQASGVALAAGALPLKAEA). The region spanning 229–288 (VRLRLLNASNARRYELSMTDNRAFHVVASDLGFLPAPMTVKRLSLGPGERREVLVDMSQG) is the Plastocyanin-like domain.

It belongs to the FtsP family. Predicted to be exported by the Tat system. The position of the signal peptide cleavage has not been experimentally proven.

Its subcellular location is the periplasm. Functionally, cell division protein that is required for growth during stress conditions. May be involved in protecting or stabilizing the divisomal assembly under conditions of stress. This chain is Cell division protein FtsP, found in Rahnella sp. (strain Y9602).